Consider the following 432-residue polypeptide: UDP-N-acetylmuramate--L-alanine ligase (432 aa).

108–114 lines the ATP pocket; that stretch reads GAHGKTS.

It belongs to the MurCDEF family.

Its subcellular location is the cytoplasm. The catalysed reaction is UDP-N-acetyl-alpha-D-muramate + L-alanine + ATP = UDP-N-acetyl-alpha-D-muramoyl-L-alanine + ADP + phosphate + H(+). It participates in cell wall biogenesis; peptidoglycan biosynthesis. Cell wall formation. The protein is UDP-N-acetylmuramate--L-alanine ligase of Bacillus licheniformis (strain ATCC 14580 / DSM 13 / JCM 2505 / CCUG 7422 / NBRC 12200 / NCIMB 9375 / NCTC 10341 / NRRL NRS-1264 / Gibson 46).